The primary structure comprises 482 residues: Anaerobic nitric oxide reductase flavorubredoxin (482 aa).

Positions 30 to 210 (LRGSSYNSYL…PFSRLVTPKI (181 aa)) are zinc metallo-hydrolase. Fe cation-binding residues include His79, Glu81, Asp83, His147, Asp166, and His227. In terms of domain architecture, Flavodoxin-like spans 254-393 (ITLFYDTMSN…ICRQHGREIA (140 aa)). Residues 260-264 (TMSNN) and 342-369 (AFGS…EMSM) contribute to the FMN site. The Rubredoxin-like domain occupies 426 to 477 (GPCMQCSVCQWVYDPALGEPLQDVAPGTPWSDVPDNFLCPECSLGKDVFDVL). 4 residues coordinate Fe cation: Cys431, Cys434, Cys464, and Cys467.

In the N-terminal section; belongs to the zinc metallo-hydrolase group 3 family. Homotetramer. Fe cation serves as cofactor. The cofactor is FMN.

It is found in the cytoplasm. The protein operates within nitrogen metabolism; nitric oxide reduction. Anaerobic nitric oxide reductase; uses NADH to detoxify nitric oxide (NO), protecting several 4Fe-4S NO-sensitive enzymes. Has at least 2 reductase partners, only one of which (NorW, flavorubredoxin reductase) has been identified. NO probably binds to the di-iron center; electrons enter from the NorW at rubredoxin and are transferred sequentially to the FMN center and the di-iron center. Also able to function as an aerobic oxygen reductase. In Enterobacter sp. (strain 638), this protein is Anaerobic nitric oxide reductase flavorubredoxin.